A 373-amino-acid chain; its full sequence is Histidinol-phosphate aminotransferase (373 aa).

Position 233 is an N6-(pyridoxal phosphate)lysine (Lys233).

It belongs to the class-II pyridoxal-phosphate-dependent aminotransferase family. Histidinol-phosphate aminotransferase subfamily. Homodimer. Pyridoxal 5'-phosphate serves as cofactor.

The enzyme catalyses L-histidinol phosphate + 2-oxoglutarate = 3-(imidazol-4-yl)-2-oxopropyl phosphate + L-glutamate. The protein operates within amino-acid biosynthesis; L-histidine biosynthesis; L-histidine from 5-phospho-alpha-D-ribose 1-diphosphate: step 7/9. The sequence is that of Histidinol-phosphate aminotransferase from Nitratidesulfovibrio vulgaris (strain DP4) (Desulfovibrio vulgaris).